We begin with the raw amino-acid sequence, 209 residues long: 7-carboxy-7-deazaguanine synthase (209 aa).

Residues 10–12 (IQG) and arginine 25 each bind substrate. Residues 16-205 (YAGLPMLFVR…PQIHKIIYGD (190 aa)) form the Radical SAM core domain. Residues cysteine 29, cysteine 33, and cysteine 36 each contribute to the [4Fe-4S] cluster site. Threonine 38 lines the Mg(2+) pocket. Threonine 68 contributes to the substrate binding site. Glycine 70 is a binding site for S-adenosyl-L-methionine.

Belongs to the radical SAM superfamily. 7-carboxy-7-deazaguanine synthase family. Homodimer. Requires [4Fe-4S] cluster as cofactor. S-adenosyl-L-methionine is required as a cofactor. The cofactor is Mg(2+).

It catalyses the reaction 6-carboxy-5,6,7,8-tetrahydropterin + H(+) = 7-carboxy-7-deazaguanine + NH4(+). It participates in purine metabolism; 7-cyano-7-deazaguanine biosynthesis. Catalyzes the complex heterocyclic radical-mediated conversion of 6-carboxy-5,6,7,8-tetrahydropterin (CPH4) to 7-carboxy-7-deazaguanine (CDG), a step common to the biosynthetic pathways of all 7-deazapurine-containing compounds. The polypeptide is 7-carboxy-7-deazaguanine synthase (Thermoplasma acidophilum (strain ATCC 25905 / DSM 1728 / JCM 9062 / NBRC 15155 / AMRC-C165)).